The chain runs to 218 residues: Pyrrolidone-carboxylate peptidase (218 aa).

Residues Glu-81, Cys-144, and His-169 contribute to the active site.

This sequence belongs to the peptidase C15 family. In terms of assembly, homotetramer.

Its subcellular location is the cytoplasm. The catalysed reaction is Release of an N-terminal pyroglutamyl group from a polypeptide, the second amino acid generally not being Pro.. Its function is as follows. Removes 5-oxoproline from various penultimate amino acid residues except L-proline. This Deinococcus radiodurans (strain ATCC 13939 / DSM 20539 / JCM 16871 / CCUG 27074 / LMG 4051 / NBRC 15346 / NCIMB 9279 / VKM B-1422 / R1) protein is Pyrrolidone-carboxylate peptidase (pcp).